The primary structure comprises 355 residues: Ribosomal RNA small subunit methyltransferase H (355 aa).

Residues 55–57 (GGH), Asp-75, Asp-122, and Gln-129 each bind S-adenosyl-L-methionine. Positions 327–355 (ERTSQPLPATGAEDFVPAVPGAAEKGRRR) are disordered.

Belongs to the methyltransferase superfamily. RsmH family.

The protein resides in the cytoplasm. It catalyses the reaction cytidine(1402) in 16S rRNA + S-adenosyl-L-methionine = N(4)-methylcytidine(1402) in 16S rRNA + S-adenosyl-L-homocysteine + H(+). Specifically methylates the N4 position of cytidine in position 1402 (C1402) of 16S rRNA. The chain is Ribosomal RNA small subunit methyltransferase H from Bordetella avium (strain 197N).